The primary structure comprises 129 residues: M-zodatoxin-Lt8h (129 aa).

A signal peptide spans 1-20 (MKYFVVALALVAAFACIAES). The propeptide occupies 21–60 (KPAESEHELAEVEEENELADLEDAVWLEDLADLSDLEETR).

It belongs to the cationic peptide 06 (cytoinsectotoxin) family. As to expression, expressed by the venom gland.

The protein localises to the secreted. Functionally, insecticidal, cytolytic and antimicrobial peptide. Has insecticidal activity against the flesh fly S.carnaria. Has antibacterial activity against the Gram-negative bacteria E.coli. Forms voltage-dependent, ion-permeable channels in membranes. At high concentration causes cell membrane lysis. The protein is M-zodatoxin-Lt8h (cit 1-11) of Lachesana tarabaevi (Spider).